Consider the following 485-residue polypeptide: Bifunctional protein GlmU (485 aa).

The tract at residues 1-241 (MSASDFSSAV…ARELAGVNDR (241 aa)) is pyrophosphorylase. UDP-N-acetyl-alpha-D-glucosamine is bound by residues 13-16 (LAAG), lysine 27, glutamine 84, and 89-90 (GT). Aspartate 114 provides a ligand contact to Mg(2+). Glycine 151, glutamate 166, asparagine 181, and asparagine 239 together coordinate UDP-N-acetyl-alpha-D-glucosamine. Residue asparagine 239 participates in Mg(2+) binding. A linker region spans residues 242-262 (VQLAEAGAELNRRTVIAAMRG). Residues 263-485 (GATIVDPATT…AAQNVHNQEG (223 aa)) are N-acetyltransferase. Arginine 344 and lysine 362 together coordinate UDP-N-acetyl-alpha-D-glucosamine. The active-site Proton acceptor is histidine 374. Tyrosine 377 and asparagine 388 together coordinate UDP-N-acetyl-alpha-D-glucosamine. Acetyl-CoA is bound by residues alanine 391, 397–398 (NY), serine 416, and alanine 434. Positions 465–485 (RPGTAAAQAAEAAQNVHNQEG) are disordered. The segment covering 469-478 (AAAQAAEAAQ) has biased composition (low complexity).

This sequence in the N-terminal section; belongs to the N-acetylglucosamine-1-phosphate uridyltransferase family. In the C-terminal section; belongs to the transferase hexapeptide repeat family. As to quaternary structure, homotrimer. The cofactor is Mg(2+).

Its subcellular location is the cytoplasm. It catalyses the reaction alpha-D-glucosamine 1-phosphate + acetyl-CoA = N-acetyl-alpha-D-glucosamine 1-phosphate + CoA + H(+). It carries out the reaction N-acetyl-alpha-D-glucosamine 1-phosphate + UTP + H(+) = UDP-N-acetyl-alpha-D-glucosamine + diphosphate. Its pathway is nucleotide-sugar biosynthesis; UDP-N-acetyl-alpha-D-glucosamine biosynthesis; N-acetyl-alpha-D-glucosamine 1-phosphate from alpha-D-glucosamine 6-phosphate (route II): step 2/2. It functions in the pathway nucleotide-sugar biosynthesis; UDP-N-acetyl-alpha-D-glucosamine biosynthesis; UDP-N-acetyl-alpha-D-glucosamine from N-acetyl-alpha-D-glucosamine 1-phosphate: step 1/1. It participates in bacterial outer membrane biogenesis; LPS lipid A biosynthesis. Catalyzes the last two sequential reactions in the de novo biosynthetic pathway for UDP-N-acetylglucosamine (UDP-GlcNAc). The C-terminal domain catalyzes the transfer of acetyl group from acetyl coenzyme A to glucosamine-1-phosphate (GlcN-1-P) to produce N-acetylglucosamine-1-phosphate (GlcNAc-1-P), which is converted into UDP-GlcNAc by the transfer of uridine 5-monophosphate (from uridine 5-triphosphate), a reaction catalyzed by the N-terminal domain. The protein is Bifunctional protein GlmU of Corynebacterium glutamicum (strain ATCC 13032 / DSM 20300 / JCM 1318 / BCRC 11384 / CCUG 27702 / LMG 3730 / NBRC 12168 / NCIMB 10025 / NRRL B-2784 / 534).